Reading from the N-terminus, the 412-residue chain is Tyrosine--tRNA ligase (412 aa).

Y38 contributes to the L-tyrosine binding site. A 'HIGH' region motif is present at residues 43 to 52 (CTANSLHIGS). L-tyrosine-binding residues include Y170 and Q174. Residues 230 to 234 (KMGKT) carry the 'KMSKS' region motif. Position 233 (K233) interacts with ATP. Residues 343–409 (IPISKLLHMW…CGKKRRLKVV (67 aa)) form the S4 RNA-binding domain.

It belongs to the class-I aminoacyl-tRNA synthetase family. TyrS type 1 subfamily. As to quaternary structure, homodimer.

The protein resides in the cytoplasm. It carries out the reaction tRNA(Tyr) + L-tyrosine + ATP = L-tyrosyl-tRNA(Tyr) + AMP + diphosphate + H(+). Catalyzes the attachment of tyrosine to tRNA(Tyr) in a two-step reaction: tyrosine is first activated by ATP to form Tyr-AMP and then transferred to the acceptor end of tRNA(Tyr). This chain is Tyrosine--tRNA ligase, found in Anaplasma phagocytophilum (strain HZ).